Here is a 222-residue protein sequence, read N- to C-terminus: MTLEFSQLGLAPDFVDYMQGWDLQRDIHNKVVAGEKNSTVLILEHAAVYTAGKLTEDHERPFDGTPVVPVDRGGKLTWHGPGQLIAYPILKLKNRAGIRDYVERLEAIMIAVMQDYGIKAVTVKGRAGVWILADDKGPDRKIAAIGIRVLDGVTMHGVAINCSNDLAPYAQIIACGITDASVTTMSLETGRTINPADIVDRFVEEFSKHDEALVSTPEGALQ.

The region spanning 34–214 (GEKNSTVLIL…EFSKHDEALV (181 aa)) is the BPL/LPL catalytic domain. Substrate is bound by residues 72 to 79 (RGGKLTWH), 144 to 146 (AIG), and 157 to 159 (GVA). Cysteine 175 acts as the Acyl-thioester intermediate in catalysis.

The protein belongs to the LipB family.

It localises to the cytoplasm. The enzyme catalyses octanoyl-[ACP] + L-lysyl-[protein] = N(6)-octanoyl-L-lysyl-[protein] + holo-[ACP] + H(+). The protein operates within protein modification; protein lipoylation via endogenous pathway; protein N(6)-(lipoyl)lysine from octanoyl-[acyl-carrier-protein]: step 1/2. Catalyzes the transfer of endogenously produced octanoic acid from octanoyl-acyl-carrier-protein onto the lipoyl domains of lipoate-dependent enzymes. Lipoyl-ACP can also act as a substrate although octanoyl-ACP is likely to be the physiological substrate. The chain is Octanoyltransferase from Paenarthrobacter aurescens (strain TC1).